The sequence spans 133 residues: Single-stranded DNA-binding protein 2 (133 aa).

One can recognise an SSB domain in the interval 1 to 103 (MNKTILIGRL…VVAEEVKFLE (103 aa)).

In terms of assembly, homotetramer.

The sequence is that of Single-stranded DNA-binding protein 2 (ssb2) from Clostridium acetobutylicum (strain ATCC 824 / DSM 792 / JCM 1419 / IAM 19013 / LMG 5710 / NBRC 13948 / NRRL B-527 / VKM B-1787 / 2291 / W).